A 464-amino-acid chain; its full sequence is Asparagine--tRNA ligase (464 aa).

Belongs to the class-II aminoacyl-tRNA synthetase family. In terms of assembly, homodimer.

It localises to the cytoplasm. The enzyme catalyses tRNA(Asn) + L-asparagine + ATP = L-asparaginyl-tRNA(Asn) + AMP + diphosphate + H(+). The sequence is that of Asparagine--tRNA ligase from Clostridium beijerinckii (strain ATCC 51743 / NCIMB 8052) (Clostridium acetobutylicum).